The following is a 205-amino-acid chain: Thymidylate kinase (205 aa).

7–14 (GIDGSGKT) is a binding site for ATP.

Belongs to the thymidylate kinase family.

The enzyme catalyses dTMP + ATP = dTDP + ADP. Phosphorylation of dTMP to form dTDP in both de novo and salvage pathways of dTTP synthesis. The polypeptide is Thymidylate kinase (Wolbachia pipientis subsp. Culex pipiens (strain wPip)).